The chain runs to 133 residues: ATP synthase epsilon chain (133 aa).

Belongs to the ATPase epsilon chain family. F-type ATPases have 2 components, CF(1) - the catalytic core - and CF(0) - the membrane proton channel. CF(1) has five subunits: alpha(3), beta(3), gamma(1), delta(1), epsilon(1). CF(0) has three main subunits: a, b and c.

Its subcellular location is the cell inner membrane. In terms of biological role, produces ATP from ADP in the presence of a proton gradient across the membrane. The polypeptide is ATP synthase epsilon chain (Desulfosudis oleivorans (strain DSM 6200 / JCM 39069 / Hxd3) (Desulfococcus oleovorans)).